We begin with the raw amino-acid sequence, 483 residues long: Regulatory protein ViaA (483 aa).

Belongs to the ViaA family. In terms of assembly, homodimer. Interacts with RavA.

It localises to the cytoplasm. Functionally, component of the RavA-ViaA chaperone complex, which may act on the membrane to optimize the function of some of the respiratory chains. ViaA stimulates the ATPase activity of RavA. The polypeptide is Regulatory protein ViaA (Escherichia coli O17:K52:H18 (strain UMN026 / ExPEC)).